The sequence spans 270 residues: Glutamate racemase (270 aa).

Substrate contacts are provided by residues 14 to 15 and 46 to 47; these read DS and YG. Cysteine 77 functions as the Proton donor/acceptor in the catalytic mechanism. 78–79 serves as a coordination point for substrate; sequence NT. Residue cysteine 189 is the Proton donor/acceptor of the active site. 190–191 contacts substrate; the sequence is TH.

Belongs to the aspartate/glutamate racemases family.

The catalysed reaction is L-glutamate = D-glutamate. It participates in cell wall biogenesis; peptidoglycan biosynthesis. Its function is as follows. Provides the (R)-glutamate required for cell wall biosynthesis. This is Glutamate racemase from Neisseria meningitidis serogroup A / serotype 4A (strain DSM 15465 / Z2491).